The following is a 96-amino-acid chain: ATP synthase subunit f, mitochondrial (96 aa).

Belongs to the ATPase F chain family.

It localises to the mitochondrion. Its subcellular location is the mitochondrion inner membrane. Mitochondrial membrane ATP synthase (F(1)F(0) ATP synthase or Complex V) produces ATP from ADP in the presence of a proton gradient across the membrane which is generated by electron transport complexes of the respiratory chain. F-type ATPases consist of two structural domains, F(1) - containing the extramembraneous catalytic core and F(0) - containing the membrane proton channel, linked together by a central stalk and a peripheral stalk. During catalysis, ATP synthesis in the catalytic domain of F(1) is coupled via a rotary mechanism of the central stalk subunits to proton translocation. This chain is ATP synthase subunit f, mitochondrial (atp17), found in Schizosaccharomyces pombe (strain 972 / ATCC 24843) (Fission yeast).